The primary structure comprises 240 residues: Phosphoribosylaminoimidazole-succinocarboxamide synthase (240 aa).

This sequence belongs to the SAICAR synthetase family.

It carries out the reaction 5-amino-1-(5-phospho-D-ribosyl)imidazole-4-carboxylate + L-aspartate + ATP = (2S)-2-[5-amino-1-(5-phospho-beta-D-ribosyl)imidazole-4-carboxamido]succinate + ADP + phosphate + 2 H(+). It participates in purine metabolism; IMP biosynthesis via de novo pathway; 5-amino-1-(5-phospho-D-ribosyl)imidazole-4-carboxamide from 5-amino-1-(5-phospho-D-ribosyl)imidazole-4-carboxylate: step 1/2. The polypeptide is Phosphoribosylaminoimidazole-succinocarboxamide synthase (Pyrobaculum calidifontis (strain DSM 21063 / JCM 11548 / VA1)).